Consider the following 380-residue polypeptide: MSEATLLSYTKKLLASPPQLSSTDLHDALLVILSLLQKCDTNSDESLSIYTKVSSFLTALRVTKLDHKAEYIAEAAKAVLRHSDLVDLPLPKKDELHPEDGPVILDIVGTGGDGQNTFNVSTSAAIVASGIQGLKICKHGGKASTSNSGAGDLIGTLGCDMFKVNSSTVPKLWPDNTFMFLLAPFFHHGMGHVSKIRKFLGIPTVFNVLGPLLHPVSHVNKRILGVYSKELAPEYAKAAALVYPGSETFIVWGHVGLDEVSPIGKTTVWHIDPTSSELKLKTFQLEPSMFGLEEHELSKCASYGPKENARILKEEVLSGKYHLGDNNPIYDYILMNTAVLYCLSQGHQNWKEGIIKAEESIHSGNALRSLEHFIDSVSSL.

5-phospho-alpha-D-ribose 1-diphosphate-binding residues include G109, N119, S121, T122, K142, S144, and S146. 2 residues coordinate Mg(2+): D258 and E259.

This sequence belongs to the anthranilate phosphoribosyltransferase family. Homodimer. Mg(2+) serves as cofactor.

It carries out the reaction N-(5-phospho-beta-D-ribosyl)anthranilate + diphosphate = 5-phospho-alpha-D-ribose 1-diphosphate + anthranilate. The protein operates within amino-acid biosynthesis; L-tryptophan biosynthesis; L-tryptophan from chorismate: step 2/5. Catalyzes the transfer of the phosphoribosyl group of 5-phosphorylribose-1-pyrophosphate (PRPP) to anthranilate to yield N-(5'-phosphoribosyl)-anthranilate (PRA), the second step in tryptophan biosynthesis. This Saccharomyces cerevisiae (strain ATCC 204508 / S288c) (Baker's yeast) protein is Anthranilate phosphoribosyltransferase.